Here is a 228-residue protein sequence, read N- to C-terminus: PKHD-type hydroxylase YbiX (228 aa).

Residues 78-177 form the Fe2OG dioxygenase domain; the sequence is TLSTPLFNRY…RVASFIWIQS (100 aa). Residues His96, Asp98, and His158 each contribute to the Fe cation site. Arg168 lines the 2-oxoglutarate pocket.

Fe(2+) is required as a cofactor. Requires L-ascorbate as cofactor.

This chain is PKHD-type hydroxylase YbiX, found in Escherichia coli O157:H7.